The primary structure comprises 263 residues: Imidazole glycerol phosphate synthase subunit HisF (263 aa).

Active-site residues include Asp22 and Asp141.

Belongs to the HisA/HisF family. Heterodimer of HisH and HisF.

The protein resides in the cytoplasm. The catalysed reaction is 5-[(5-phospho-1-deoxy-D-ribulos-1-ylimino)methylamino]-1-(5-phospho-beta-D-ribosyl)imidazole-4-carboxamide + L-glutamine = D-erythro-1-(imidazol-4-yl)glycerol 3-phosphate + 5-amino-1-(5-phospho-beta-D-ribosyl)imidazole-4-carboxamide + L-glutamate + H(+). It participates in amino-acid biosynthesis; L-histidine biosynthesis; L-histidine from 5-phospho-alpha-D-ribose 1-diphosphate: step 5/9. IGPS catalyzes the conversion of PRFAR and glutamine to IGP, AICAR and glutamate. The HisF subunit catalyzes the cyclization activity that produces IGP and AICAR from PRFAR using the ammonia provided by the HisH subunit. This Clavibacter michiganensis subsp. michiganensis (strain NCPPB 382) protein is Imidazole glycerol phosphate synthase subunit HisF.